The chain runs to 376 residues: N6-methyladenosine RNA methyltransferase MTA1 (376 aa).

The interval 53–78 (TRRLISSPPPETPFVTPEPKNGPSPL) is disordered.

This sequence belongs to the MT-A70-like family.

The enzyme catalyses an adenosine in mRNA + S-adenosyl-L-methionine = an N(6)-methyladenosine in mRNA + S-adenosyl-L-homocysteine + H(+). Its function is as follows. N6-methyladenosine RNA methyltransferase that plays a crucial role in fungal phenotypic traits, virulence, and stress tolerance. Mediates the methylation of mRNAs to produce N6-methyladenosine (m6A)-containing mRNAs. M6A is a modification present at internal sites of mRNAs and some non-coding RNAs and plays a role in mRNA stability and processing. Required for appressorium turgor pressure and regulates autophagosome formation during appressorium formation stage. Specifically, mediates the stability of ATG8 mRNA in a m6A-dependent manner via modification of the m6A site A982 located in 3'UTR region. The sequence is that of N6-methyladenosine RNA methyltransferase MTA1 from Pyricularia oryzae (strain 70-15 / ATCC MYA-4617 / FGSC 8958) (Rice blast fungus).